Consider the following 77-residue polypeptide: U8-lycotoxin-Ls1u (77 aa).

A signal peptide spans 1 to 20 (MKLIIFTGLVLFAIVSLIEA). Residues 21 to 26 (QAENEK) constitute a propeptide that is removed on maturation.

This sequence belongs to the neurotoxin 19 (CSTX) family. 08 (U8-Lctx) subfamily. Contains 4 disulfide bonds. Expressed by the venom gland.

The protein localises to the secreted. This is U8-lycotoxin-Ls1u from Lycosa singoriensis (Wolf spider).